An 82-amino-acid polypeptide reads, in one-letter code: Endocuticle structural protein SgAbd-6 (82 aa).

Glutamine 1 carries the pyrrolidone carboxylic acid modification. Positions 18 to 82 constitute a Chitin-binding type R&amp;R domain; sequence LGQYTFGFKT…ENGFQPQYTQ (65 aa).

In terms of biological role, component of the abdominal endocuticle. The chain is Endocuticle structural protein SgAbd-6 from Schistocerca gregaria (Desert locust).